Here is a 447-residue protein sequence, read N- to C-terminus: Argininosuccinate synthase (447 aa).

Residues 17-25 (AFSGGLDTS) and Ala-43 each bind ATP. Tyr-99 serves as a coordination point for L-citrulline. Gly-129 and Thr-131 together coordinate ATP. Residues Thr-131, Asn-135, and Asp-136 each contribute to the L-aspartate site. An L-citrulline-binding site is contributed by Asn-135. Asp-136 contributes to the ATP binding site. Positions 139 and 192 each coordinate L-citrulline. Residue Asp-194 participates in ATP binding. Residues Thr-201, Glu-203, and Glu-280 each contribute to the L-citrulline site.

Belongs to the argininosuccinate synthase family. Type 2 subfamily. As to quaternary structure, homotetramer.

It localises to the cytoplasm. It carries out the reaction L-citrulline + L-aspartate + ATP = 2-(N(omega)-L-arginino)succinate + AMP + diphosphate + H(+). It participates in amino-acid biosynthesis; L-arginine biosynthesis; L-arginine from L-ornithine and carbamoyl phosphate: step 2/3. The chain is Argininosuccinate synthase (argG) from Salmonella typhi.